A 137-amino-acid polypeptide reads, in one-letter code: Phosphoribosyl-AMP cyclohydrolase (137 aa).

D84 contacts Mg(2+). Position 85 (C85) interacts with Zn(2+). Positions 86 and 88 each coordinate Mg(2+). C101 and C108 together coordinate Zn(2+).

It belongs to the PRA-CH family. Homodimer. Requires Mg(2+) as cofactor. It depends on Zn(2+) as a cofactor.

It localises to the cytoplasm. The catalysed reaction is 1-(5-phospho-beta-D-ribosyl)-5'-AMP + H2O = 1-(5-phospho-beta-D-ribosyl)-5-[(5-phospho-beta-D-ribosylamino)methylideneamino]imidazole-4-carboxamide. It participates in amino-acid biosynthesis; L-histidine biosynthesis; L-histidine from 5-phospho-alpha-D-ribose 1-diphosphate: step 3/9. Functionally, catalyzes the hydrolysis of the adenine ring of phosphoribosyl-AMP. The protein is Phosphoribosyl-AMP cyclohydrolase of Prosthecochloris aestuarii (strain DSM 271 / SK 413).